The following is a 931-amino-acid chain: Transportin (931 aa).

HEAT repeat units follow at residues 10–37, 42–79, 88–121, 127–164, 171–201, 214–241, 253–280, 296–421, 430–459, 471–498, 512–545, 553–586, 594–632, 640–693, 704–735, 743–776, 784–819, 827–860, and 869–900; these read GLKQ…EELD, VPDY…QYFE, YIKR…KSCF, LLPA…LDSD, NQLI…YFII, FLKG…VTLV, KDVI…FWTA, PVLV…LSGI, VTLP…GAIA, SKVI…TLSR, LHPL…EEEA, LQMI…AKVV, ELIN…SSIG, SLFF…GIGT, LPHL…KFCL, PDYL…IRMP, VAIR…IVSP, DKFI…INNN, and VYIC…KTSM. The 68-residue stretch at 32 to 99 folds into the Importin N-terminal domain; sequence IREELDKFHS…KREILPVLSD (68 aa). Residues 317-401 form a disordered region; the sequence is DQGDDSMTPD…DDDDDDDGFE (85 aa). The segment covering 358 to 381 has biased composition (low complexity); sequence DNNNNSNNNNSSNNNSSNNNNNNN. Over residues 382-401 the composition is skewed to acidic residues; that stretch reads NEDDEEYNDDDDDDDDDGFE.

This sequence belongs to the importin beta family. Importin beta-2 subfamily. Forms a complex with an importin alpha subunit.

The protein resides in the cytoplasm. The protein localises to the nucleus envelope. Its function is as follows. Functions in nuclear protein import via a substrate-importin alpha-beta transport complex that passes though the nuclear pore complexes (NPC). Mediates docking of the substrate-importin complex to distinct nucleoporins. This Dictyostelium discoideum (Social amoeba) protein is Transportin (tnpo).